We begin with the raw amino-acid sequence, 540 residues long: MAGGRSGSRELPETPTWAVAVVCAVLVLVSVAMEHGLHNLSHWFRRRQKKAMGDALDKIKAELMLLGFISLLLTVAQAPISKICIPKSAANILLPCKAGQDAIEEEAASDRRSLAGAGGGDYCSKFDGKVALMSAKSMHQLHIFIFVLAVFHVTYCVITMGLGRLKMKKWKKWESQTNSLEYQFAIDPSRFRFTHQTSFVKRHLGSFSSTPGLRWIVAFFRQFFGSVTKVDYLTMRQGFINAHLSQNSKFDFHKYIKRSLEDDFKVVVGISLPLWFVGILVLFLDIHGLGTLIWISFVPLIIVLLVGTKLEMVIMQMAQEIQDRATVIQGAPVVEPSNKYFWFNRPDWVLFFIHLTLFHNAFQMAHFVWTMATPGLKKCFHENIWLSIVEVIVGISLQVLCSYITFPLYALVTQMGSNMKKTIFEEQTMKALMNWRKKAMEKKKVRDADAFLAQMSVDFATPASSRSASPVHLLQDHRARSDDPPSPITVASPPAPEEDIYPVPAAAASRQLLDDPPDRRWMASSSADIADSDFSFSAQR.

At 1 to 16 (MAGGRSGSRELPETPT) the chain is on the extracellular side. Residues 17 to 37 (WAVAVVCAVLVLVSVAMEHGL) form a helical membrane-spanning segment. At 38 to 60 (HNLSHWFRRRQKKAMGDALDKIK) the chain is on the cytoplasmic side. The chain crosses the membrane as a helical span at residues 61 to 81 (AELMLLGFISLLLTVAQAPIS). At 82-142 (KICIPKSAAN…MSAKSMHQLH (61 aa)) the chain is on the extracellular side. A helical transmembrane segment spans residues 143–163 (IFIFVLAVFHVTYCVITMGLG). Residues 164–265 (RLKMKKWKKW…IKRSLEDDFK (102 aa)) lie on the Cytoplasmic side of the membrane. Residues 266 to 286 (VVVGISLPLWFVGILVLFLDI) traverse the membrane as a helical segment. Position 287 (histidine 287) is a topological domain, extracellular. The helical transmembrane segment at 288–308 (GLGTLIWISFVPLIIVLLVGT) threads the bilayer. The Cytoplasmic portion of the chain corresponds to 309 to 347 (KLEMVIMQMAQEIQDRATVIQGAPVVEPSNKYFWFNRPD). The chain crosses the membrane as a helical span at residues 348 to 368 (WVLFFIHLTLFHNAFQMAHFV). Topologically, residues 369-383 (WTMATPGLKKCFHEN) are extracellular. Residues 384-404 (IWLSIVEVIVGISLQVLCSYI) form a helical membrane-spanning segment. At 405 to 540 (TFPLYALVTQ…DSDFSFSAQR (136 aa)) the chain is on the cytoplasmic side. The calmodulin-binding stretch occupies residues 426-447 (EQTMKALMNWRKKAMEKKKVRD). The segment at 468-526 (ASPVHLLQDHRARSDDPPSPITVASPPAPEEDIYPVPAAAASRQLLDDPPDRRWMASSS) is disordered. 2 stretches are compositionally biased toward basic and acidic residues: residues 474 to 483 (LQDHRARSDD) and 512 to 521 (LLDDPPDRRW).

The protein belongs to the MLO family.

Its subcellular location is the membrane. In terms of biological role, may be involved in modulation of pathogen defense and leaf cell death. Activity seems to be regulated by Ca(2+)-dependent calmodulin binding and seems not to require heterotrimeric G proteins. The chain is MLO protein homolog 1 (MLO1) from Oryza sativa subsp. japonica (Rice).